A 587-amino-acid polypeptide reads, in one-letter code: UDP-N-acetylmuramoylalanine--D-glutamate ligase (587 aa).

The disordered stretch occupies residues 124–147; the sequence is DHLVPPESPLSDASDISDASDATD. Residues 132–147 show a composition bias toward low complexity; it reads PLSDASDISDASDATD. 214–220 serves as a coordination point for ATP; sequence GTNGKTT.

This sequence belongs to the MurCDEF family.

The protein resides in the cytoplasm. The catalysed reaction is UDP-N-acetyl-alpha-D-muramoyl-L-alanine + D-glutamate + ATP = UDP-N-acetyl-alpha-D-muramoyl-L-alanyl-D-glutamate + ADP + phosphate + H(+). It participates in cell wall biogenesis; peptidoglycan biosynthesis. Its function is as follows. Cell wall formation. Catalyzes the addition of glutamate to the nucleotide precursor UDP-N-acetylmuramoyl-L-alanine (UMA). This is UDP-N-acetylmuramoylalanine--D-glutamate ligase from Polaromonas sp. (strain JS666 / ATCC BAA-500).